The sequence spans 356 residues: Growth hormone-regulated TBC protein 1-A (356 aa).

The disordered stretch occupies residues 1–29 (MEERDRTGRTGQPQHRINQPSTARERANS). A compositionally biased stretch (polar residues) spans 9-22 (RTGQPQHRINQPST). The region spanning 87–277 (GVPNEHRPLV…RIWDCLFYEG (191 aa)) is the Rab-GAP TBC domain.

In terms of biological role, may act as a GTPase-activating protein for Rab family protein(s). This is Growth hormone-regulated TBC protein 1-A (grtp1a) from Danio rerio (Zebrafish).